We begin with the raw amino-acid sequence, 477 residues long: Spliceosome-associated protein CWC27 homolog (477 aa).

The PPIase cyclophilin-type domain maps to 11-166; the sequence is SNGKVLLKTT…NPHKIKCTEV (156 aa). 2 disordered regions span residues 203–355 and 401–477; these read LLSF…AENT and TQAI…KERR. A compositionally biased stretch (acidic residues) spans 208-218; it reads EEAEEDEEEVN. Basic and acidic residues-rich tracts occupy residues 230-240 and 247-258; these read SSHDLLKDDPR and VEREKDSQSADS. Over residues 259–279 the composition is skewed to acidic residues; that stretch reads DKDEDEMSDDDDEEEDDEMDS. Composition is skewed to basic and acidic residues over residues 280-299, 311-353, and 430-442; these read DEKHQMKDRISNKLRKDPSK, EERK…KEAE, and QFEEKSGKVKDAN. Residues 308–381 adopt a coiled-coil conformation; it reads DEAEERKSSR…EEVRKKNTNK (74 aa).

It belongs to the cyclophilin-type PPIase family. In terms of assembly, part of the activated spliceosome B/catalytic step 1 spliceosome, one of the forms of the spliceosome which has a well-formed active site but still cannot catalyze the branching reaction and is composed at least of 52 proteins, the U2, U5 and U6 snRNAs and the pre-mRNA. Recruited during early steps of activated spliceosome B maturation, it is probably one of the first proteins released from this complex as he matures to the spliceosome C complex. Component of the minor spliceosome, which splices U12-type introns.

The protein localises to the nucleus. Functionally, as part of the spliceosome, plays a role in pre-mRNA splicing. Probable inactive PPIase with no peptidyl-prolyl cis-trans isomerase activity. The polypeptide is Spliceosome-associated protein CWC27 homolog (cwc27) (Xenopus laevis (African clawed frog)).